We begin with the raw amino-acid sequence, 603 residues long: Polypeptide N-acetylgalactosaminyltransferase 10 (603 aa).

Residues 1 to 11 (MRRKEKRLLQA) are Cytoplasmic-facing. Residues 12 to 31 (VALALAALVLLPNVGLWALY) form a helical; Signal-anchor for type II membrane protein membrane-spanning segment. At 32–603 (RERQPDGSPG…STVLENFNKN (572 aa)) the chain is on the lumenal side. N-linked (GlcNAc...) asparagine glycans are attached at residues Asn-124 and Asn-146. Intrachain disulfides connect Cys-135–Cys-365, Cys-356–Cys-432, Cys-471–Cys-488, Cys-523–Cys-538, and Cys-563–Cys-578. The segment at 144–253 (LPNTSIIIPF…VNWLPPLLDR (110 aa)) is catalytic subdomain A. Residues Asp-185 and Arg-214 each coordinate substrate. Residue Asp-237 coordinates Mn(2+). Substrate is bound at residue Ser-238. His-239 contacts Mn(2+). The tract at residues 311–373 (PFESPVMAGG…PCSRVGHIYR (63 aa)) is catalytic subdomain B. Residue Trp-342 participates in substrate binding. His-370 serves as a coordination point for Mn(2+). Arg-373 and Tyr-378 together coordinate substrate. Residues 373–384 (RKYVPYKVPAGV) form a flexible loop region. Positions 458 to 590 (AAWGEIRNVG…SSLTQQWLFE (133 aa)) constitute a Ricin B-type lectin domain. N-linked (GlcNAc...) asparagine glycosylation occurs at Asn-593.

The protein belongs to the glycosyltransferase 2 family. GalNAc-T subfamily. It depends on Mn(2+) as a cofactor. As to expression, expressed at higher level than GALNT9. In the developing hindbrain region of 14.5 dpc embryos it accumulates in the rapidly dividing, undifferentiated ventricular zone adjacent to the pons. It also accumulates in the regions immediately rostral and caudal to the dorsal rhombic lips differentiating into the cerebellum. Not expressed in the developing choroid plexus.

It localises to the golgi apparatus membrane. The enzyme catalyses L-seryl-[protein] + UDP-N-acetyl-alpha-D-galactosamine = a 3-O-[N-acetyl-alpha-D-galactosaminyl]-L-seryl-[protein] + UDP + H(+). The catalysed reaction is L-threonyl-[protein] + UDP-N-acetyl-alpha-D-galactosamine = a 3-O-[N-acetyl-alpha-D-galactosaminyl]-L-threonyl-[protein] + UDP + H(+). The protein operates within protein modification; protein glycosylation. Catalyzes the initial reaction in O-linked oligosaccharide biosynthesis, the transfer of an N-acetyl-D-galactosamine residue to a serine or threonine residue on the protein receptor. Has activity toward Muc5Ac and EA2 peptide substrates. This Mus musculus (Mouse) protein is Polypeptide N-acetylgalactosaminyltransferase 10 (Galnt10).